The chain runs to 45 residues: Photosystem II reaction center protein K (45 aa).

Residues 1-8 (METALLLA) constitute a propeptide that is removed on maturation. Residues 24 to 44 (LPLIPLFFLLLAFVWQASVGF) traverse the membrane as a helical segment.

Belongs to the PsbK family. In terms of assembly, PSII is composed of 1 copy each of membrane proteins PsbA, PsbB, PsbC, PsbD, PsbE, PsbF, PsbH, PsbI, PsbJ, PsbK, PsbL, PsbM, PsbT, PsbX, PsbY, PsbZ, Psb30/Ycf12, peripheral proteins PsbO, CyanoQ (PsbQ), PsbU, PsbV and a large number of cofactors. It forms dimeric complexes.

The protein resides in the cellular thylakoid membrane. In terms of biological role, one of the components of the core complex of photosystem II (PSII). PSII is a light-driven water:plastoquinone oxidoreductase that uses light energy to abstract electrons from H(2)O, generating O(2) and a proton gradient subsequently used for ATP formation. It consists of a core antenna complex that captures photons, and an electron transfer chain that converts photonic excitation into a charge separation. This Microcystis aeruginosa (strain NIES-843 / IAM M-2473) protein is Photosystem II reaction center protein K.